The following is a 309-amino-acid chain: Glutamyl-Q tRNA(Asp) synthetase (309 aa).

Residues 8–12 (RFSPS) and E44 contribute to the L-glutamate site. Positions 11 to 21 (PSPTGPLHAGS) match the 'HIGH' region motif. The Zn(2+) site is built by C100, C102, Y126, and C130. Residues Y205 and R223 each contribute to the L-glutamate site. The short motif at 261–265 (KLSKQ) is the 'KMSKS' region element. K264 is a binding site for ATP.

This sequence belongs to the class-I aminoacyl-tRNA synthetase family. GluQ subfamily. The cofactor is Zn(2+).

Catalyzes the tRNA-independent activation of glutamate in presence of ATP and the subsequent transfer of glutamate onto a tRNA(Asp). Glutamate is transferred on the 2-amino-5-(4,5-dihydroxy-2-cyclopenten-1-yl) moiety of the queuosine in the wobble position of the QUC anticodon. The chain is Glutamyl-Q tRNA(Asp) synthetase from Albidiferax ferrireducens (strain ATCC BAA-621 / DSM 15236 / T118) (Rhodoferax ferrireducens).